The following is a 208-amino-acid chain: Protein-L-isoaspartate O-methyltransferase (208 aa).

Ser59 is a catalytic residue.

The protein belongs to the methyltransferase superfamily. L-isoaspartyl/D-aspartyl protein methyltransferase family.

It localises to the cytoplasm. The catalysed reaction is [protein]-L-isoaspartate + S-adenosyl-L-methionine = [protein]-L-isoaspartate alpha-methyl ester + S-adenosyl-L-homocysteine. Functionally, catalyzes the methyl esterification of L-isoaspartyl residues in peptides and proteins that result from spontaneous decomposition of normal L-aspartyl and L-asparaginyl residues. It plays a role in the repair and/or degradation of damaged proteins. The sequence is that of Protein-L-isoaspartate O-methyltransferase from Escherichia coli O1:K1 / APEC.